Reading from the N-terminus, the 253-residue chain is Ethylene-responsive transcription factor RAP2-11 (253 aa).

A DNA-binding region (AP2/ERF) is located at residues 21-78 (KFVGVRQRPSGKWVAEIKDTTQKIRMWLGTFETAEEAARAYDEAACLLRGSNTRTNFA).

This sequence belongs to the AP2/ERF transcription factor family. ERF subfamily.

The protein resides in the nucleus. Its function is as follows. Probably acts as a transcriptional activator. Binds to the GCC-box pathogenesis-related promoter element. May be involved in the regulation of gene expression by stress factors and by components of stress signal transduction pathways. The polypeptide is Ethylene-responsive transcription factor RAP2-11 (RAP2-11) (Arabidopsis thaliana (Mouse-ear cress)).